We begin with the raw amino-acid sequence, 619 residues long: Schlafen family member 12-like (619 aa).

Residues isoleucine 598–leucine 618 form a helical membrane-spanning segment.

This sequence belongs to the Schlafen family.

It is found in the membrane. This is Schlafen family member 12-like (SLFN12L) from Pongo abelii (Sumatran orangutan).